The sequence spans 887 residues: PAN2-PAN3 deadenylation complex subunit Pan3 (887 aa).

The segment at 49-77 (GVKLKYCRYYAKDKTCFYGEECQFLHEDP) adopts a C3H1-type zinc-finger fold. 3 disordered regions span residues 111–139 (GGGA…GLDG), 280–307 (ENNL…SNVS), and 321–393 (PSMG…GQVI). The necessary and sufficient for interaction with PABPC1 but not needed for interaction with PAN2 stretch occupies residues 147–498 (MDGGALTDAS…PPPNRIQKSS (352 aa)). Polar residues-rich tracts occupy residues 281–290 (NNLQTPNPTA) and 298–307 (GSTSRLSNVS). Residues 284–299 (QTPNPTASEFIPKGGS) carry the PABPC-interacting motif-2 (PAM-2) motif. Phosphoserine is present on residues serine 354 and serine 361. Residues 463–750 (QIDQADMPAV…SVNDIMPMIG (288 aa)) form a pseudokinase domain region. Residues arginine 521, 570-577 (DFHAGGET), and 644-645 (TK) contribute to the ATP site. The interval 789–887 (TINERPEFQK…ELIAAANGQL (99 aa)) is knob domain.

Belongs to the protein kinase superfamily. PAN3 family. Homodimer. Forms a heterotrimer with a catalytic subunit PAN2 to form the poly(A)-nuclease (PAN) deadenylation complex. Interacts (via PAM-2 motif) with poly(A)-binding protein PABPC1 (via PABC domain), conferring substrate specificity of the enzyme complex. Interacts with the GW182 family proteins TNRC6A, TNRC6B and TNRC6C. Interacts with YTHDF3. In terms of assembly, interacts with PAN2. Interacts (via N-terminus) with PABPC1 at lower efficiency than isoform 3. As to quaternary structure, interacts with PAN2. Interacts (via N-terminus) with PABPC1 at higher efficiency than isoform 1.

Its subcellular location is the cytoplasm. The protein localises to the P-body. It localises to the nucleus. In terms of biological role, regulatory subunit of the poly(A)-nuclease (PAN) deadenylation complex, one of two cytoplasmic mRNA deadenylases involved in general and miRNA-mediated mRNA turnover. PAN specifically shortens poly(A) tails of RNA and the activity is stimulated by poly(A)-binding protein (PABP). PAN deadenylation is followed by rapid degradation of the shortened mRNA tails by the CCR4-NOT complex. Deadenylated mRNAs are then degraded by two alternative mechanisms, namely exosome-mediated 3'-5' exonucleolytic degradation, or deadenylation-dependent mRNA decapping and subsequent 5'-3' exonucleolytic degradation by XRN1. PAN3 acts as a regulator for PAN activity, recruiting the catalytic subunit PAN2 to mRNA via its interaction with RNA and PABP, and to miRNA targets via its interaction with GW182 family proteins. Functionally, decreases PAN2-mediated deadenylation, possibly by preventing progression into the second CCR4-NOT mediated stage of biphasic deadenylation. Has a significant effect on mRNA stability, generally stabilizing a subset of the transcriptome. Stabilizes mRNAs degraded by the AU-rich element (ARE)-mediated mRNA decay pathway but promotes degradation of mRNAs by the microRNA-mediated pathway. Its activity influences mRNP remodeling, specifically reducing formation of a subset of P-bodies containing GW220, an isoform of TNRC6A. Enhances PAN2 deadenylase activity and has an extensive effect on mRNA stability, generally enhancing mRNA decay across the transcriptome by multiple pathways, including the AU-rich element (ARE)-mediated pathway, microRNA-mediated pathway and the nonsense-mediated pathway (NMD). Its activity is required for efficient P-body formation. May be involved in regulating mRNAs of genes involved in cell cycle progression and cell proliferation. This is PAN2-PAN3 deadenylation complex subunit Pan3 from Mus musculus (Mouse).